The sequence spans 476 residues: tRNA-2-methylthio-N(6)-dimethylallyladenosine synthase (476 aa).

An MTTase N-terminal domain is found at 5-122 (KKLYIKTWGC…LPEMINQVKG (118 aa)). Residues Cys-14, Cys-51, Cys-85, Cys-159, Cys-163, and Cys-166 each contribute to the [4Fe-4S] cluster site. The region spanning 145–377 (RAEGPSAFVS…QQRINQQAMS (233 aa)) is the Radical SAM core domain. Residues 380–443 (RAMLGSVQRI…ANSLRGKVIR (64 aa)) enclose the TRAM domain.

Belongs to the methylthiotransferase family. MiaB subfamily. In terms of assembly, monomer. [4Fe-4S] cluster is required as a cofactor.

The protein localises to the cytoplasm. It carries out the reaction N(6)-dimethylallyladenosine(37) in tRNA + (sulfur carrier)-SH + AH2 + 2 S-adenosyl-L-methionine = 2-methylsulfanyl-N(6)-dimethylallyladenosine(37) in tRNA + (sulfur carrier)-H + 5'-deoxyadenosine + L-methionine + A + S-adenosyl-L-homocysteine + 2 H(+). Catalyzes the methylthiolation of N6-(dimethylallyl)adenosine (i(6)A), leading to the formation of 2-methylthio-N6-(dimethylallyl)adenosine (ms(2)i(6)A) at position 37 in tRNAs that read codons beginning with uridine. The polypeptide is tRNA-2-methylthio-N(6)-dimethylallyladenosine synthase (Photorhabdus laumondii subsp. laumondii (strain DSM 15139 / CIP 105565 / TT01) (Photorhabdus luminescens subsp. laumondii)).